A 360-amino-acid polypeptide reads, in one-letter code: Phospho-N-acetylmuramoyl-pentapeptide-transferase (360 aa).

A run of 10 helical transmembrane segments spans residues 26–46 (AIMSVLTALILSLWMGPRLIA), 70–90 (GTPTMGGIMILAAITITALLW), 94–114 (SNPYIWAVLAVMLGYGVVGFV), 132–152 (WKYFWQSVIALVIAFALYMHG), 168–188 (VMPQLGLLYIVLTYFVIVGTS), 199–219 (GLAIMPTVMVAGGMAFIAWAT), 239–259 (LVVLCTAIVGAGLGFLWFNTY), 263–283 (VFMGDVGSLALGGALGTIAVL), 288–308 (LLLVIMGGVFVMETVSVILQV), and 338–358 (VIVRFWIITLMLVLIALATLK).

The protein belongs to the glycosyltransferase 4 family. MraY subfamily. Mg(2+) serves as cofactor.

Its subcellular location is the cell inner membrane. The enzyme catalyses UDP-N-acetyl-alpha-D-muramoyl-L-alanyl-gamma-D-glutamyl-meso-2,6-diaminopimeloyl-D-alanyl-D-alanine + di-trans,octa-cis-undecaprenyl phosphate = di-trans,octa-cis-undecaprenyl diphospho-N-acetyl-alpha-D-muramoyl-L-alanyl-D-glutamyl-meso-2,6-diaminopimeloyl-D-alanyl-D-alanine + UMP. It functions in the pathway cell wall biogenesis; peptidoglycan biosynthesis. Catalyzes the initial step of the lipid cycle reactions in the biosynthesis of the cell wall peptidoglycan: transfers peptidoglycan precursor phospho-MurNAc-pentapeptide from UDP-MurNAc-pentapeptide onto the lipid carrier undecaprenyl phosphate, yielding undecaprenyl-pyrophosphoryl-MurNAc-pentapeptide, known as lipid I. The polypeptide is Phospho-N-acetylmuramoyl-pentapeptide-transferase (Photobacterium profundum (strain SS9)).